Consider the following 546-residue polypeptide: Coatomer subunit delta (546 aa).

The interval Asn-190–Gln-440 is interaction with DSL1. The segment at Pro-236–Glu-287 is disordered. Over residues Arg-260 to Gly-276 the composition is skewed to low complexity. Position 277 is a phosphothreonine (Thr-277). One can recognise an MHD domain in the interval Asn-288–Gln-546.

Belongs to the adaptor complexes medium subunit family. Delta-COP subfamily. Oligomeric complex that consists of at least the alpha, beta, beta', gamma, delta, epsilon and zeta subunits. Interacts with DSL1.

The protein resides in the cytoplasm. Its subcellular location is the golgi apparatus membrane. It is found in the cytoplasmic vesicle. The protein localises to the COPI-coated vesicle membrane. Its function is as follows. The coatomer is a cytosolic protein complex that binds to dilysine motifs and reversibly associates with Golgi non-clathrin-coated vesicles, which further mediate biosynthetic protein transport from the ER, via the Golgi up to the trans Golgi network. Coatomer complex is required for budding from Golgi membranes, and is essential for the retrograde Golgi-to-ER transport of dilysine-tagged proteins. This Saccharomyces cerevisiae (strain ATCC 204508 / S288c) (Baker's yeast) protein is Coatomer subunit delta (RET2).